The primary structure comprises 251 residues: Imidazole glycerol phosphate synthase subunit HisF (251 aa).

Active-site residues include Asp11 and Asp130.

This sequence belongs to the HisA/HisF family. Heterodimer of HisH and HisF.

It is found in the cytoplasm. The enzyme catalyses 5-[(5-phospho-1-deoxy-D-ribulos-1-ylimino)methylamino]-1-(5-phospho-beta-D-ribosyl)imidazole-4-carboxamide + L-glutamine = D-erythro-1-(imidazol-4-yl)glycerol 3-phosphate + 5-amino-1-(5-phospho-beta-D-ribosyl)imidazole-4-carboxamide + L-glutamate + H(+). It participates in amino-acid biosynthesis; L-histidine biosynthesis; L-histidine from 5-phospho-alpha-D-ribose 1-diphosphate: step 5/9. Its function is as follows. IGPS catalyzes the conversion of PRFAR and glutamine to IGP, AICAR and glutamate. The HisF subunit catalyzes the cyclization activity that produces IGP and AICAR from PRFAR using the ammonia provided by the HisH subunit. The protein is Imidazole glycerol phosphate synthase subunit HisF of Chlorobium limicola (strain DSM 245 / NBRC 103803 / 6330).